A 1163-amino-acid polypeptide reads, in one-letter code: Protein phosphatase 1 regulatory subunit 26 (1163 aa).

Over residues 65–83 the composition is skewed to basic and acidic residues; it reads HERLTQRGQRAERSRDTRL. 7 disordered regions span residues 65-91, 144-253, 266-393, 463-496, 514-653, 672-929, and 1073-1163; these read HERL…AVCK, RGGA…TSAR, RKPP…KKKL, APME…NIDS, VGSP…DEDL, RDPR…TATA, and TQPG…GLKL. Composition is skewed to polar residues over residues 163–179 and 189–201; these read HSST…TPGS and DQGS…MSSE. A compositionally biased stretch (basic and acidic residues) spans 208-236; the sequence is IRAEIEQFLNEKRQHENPKCDGFVDKKSD. Residues 273–297 show a composition bias toward polar residues; that stretch reads KMSTQQRNFQPKPTTEPETPVSTKL. A compositionally biased stretch (basic residues) spans 315 to 324; it reads MPARRSKRIR. The segment covering 515 to 535 has biased composition (low complexity); the sequence is GSPQPAQGPLSSPGPSGQPGI. 2 stretches are compositionally biased toward basic and acidic residues: residues 566 to 581 and 634 to 645; these read KIRE…DHIQ and ATEKESSEDKSS. Positions 672–682 are enriched in basic residues; the sequence is RDPRASCKKVR. The segment covering 766-780 has biased composition (low complexity); the sequence is TGASGHPPSASSPTS. Residues 783 to 792 are compositionally biased toward acidic residues; it reads SAVDSDDSIE. Basic and acidic residues-rich tracts occupy residues 793 to 808 and 850 to 859; these read LEIR…ESIR and EGRRGPERAR. Polar residues predominate over residues 860–871; sequence TQATGLLSQSGK. Positions 901 to 910 are enriched in low complexity; it reads SSAKASPPSR. Positions 1105 to 1131 are enriched in basic and acidic residues; the sequence is QQDRRNSASEDKVLDLRYRHRVDREPQ. The residue at position 1111 (serine 1111) is a Phosphoserine. 2 stretches are compositionally biased toward polar residues: residues 1133–1146 and 1154–1163; these read QETL…FSDT and ATVSSKGLKL.

In terms of assembly, interacts with UTP20 and PPP1CA.

Its subcellular location is the nucleus. The protein resides in the nucleolus. Functionally, inhibits phosphatase activity of protein phosphatase 1 (PP1) complexes. May positively regulate cell proliferation. This Mus musculus (Mouse) protein is Protein phosphatase 1 regulatory subunit 26 (Ppp1r26).